We begin with the raw amino-acid sequence, 820 residues long: Nuclear pore complex protein Nup93 (820 aa).

It belongs to the nucleoporin interacting component (NIC) family.

Its subcellular location is the nucleus membrane. The protein resides in the nucleus. It is found in the nuclear pore complex. In terms of biological role, plays a role in the nuclear pore complex (NPC) assembly and/or maintenance. The chain is Nuclear pore complex protein Nup93 (nup93) from Xenopus laevis (African clawed frog).